Consider the following 368-residue polypeptide: tRNA-specific 2-thiouridylase MnmA (368 aa).

ATP contacts are provided by residues 6-13 (ALSGGVDS) and M32. Residue C92 is the Nucleophile of the active site. C92 and C186 are disulfide-bonded. Position 116 (G116) interacts with ATP. The segment at 134–136 (KDQ) is interaction with tRNA. Catalysis depends on C186, which acts as the Cysteine persulfide intermediate. The tract at residues 292-293 (RY) is interaction with tRNA.

This sequence belongs to the MnmA/TRMU family.

It localises to the cytoplasm. It catalyses the reaction S-sulfanyl-L-cysteinyl-[protein] + uridine(34) in tRNA + AH2 + ATP = 2-thiouridine(34) in tRNA + L-cysteinyl-[protein] + A + AMP + diphosphate + H(+). In terms of biological role, catalyzes the 2-thiolation of uridine at the wobble position (U34) of tRNA, leading to the formation of s(2)U34. This chain is tRNA-specific 2-thiouridylase MnmA, found in Campylobacter hominis (strain ATCC BAA-381 / DSM 21671 / CCUG 45161 / LMG 19568 / NCTC 13146 / CH001A).